Reading from the N-terminus, the 168-residue chain is GTP-dependent dephospho-CoA kinase (168 aa).

Residues D49, V50, V51, D68, K70, and E120 each coordinate GTP.

It belongs to the GTP-dependent DPCK family.

The catalysed reaction is 3'-dephospho-CoA + GTP = GDP + CoA + H(+). Its pathway is cofactor biosynthesis; coenzyme A biosynthesis. Functionally, catalyzes the GTP-dependent phosphorylation of the 3'-hydroxyl group of dephosphocoenzyme A to form coenzyme A (CoA). This chain is GTP-dependent dephospho-CoA kinase, found in Pyrobaculum neutrophilum (strain DSM 2338 / JCM 9278 / NBRC 100436 / V24Sta) (Thermoproteus neutrophilus).